Reading from the N-terminus, the 565-residue chain is Sulfite reductase [NADPH] hemoprotein beta-component (565 aa).

Residues Cys-429, Cys-435, Cys-474, and Cys-478 each contribute to the [4Fe-4S] cluster site. Cys-478 contributes to the siroheme binding site.

This sequence belongs to the nitrite and sulfite reductase 4Fe-4S domain family. Alpha(8)-beta(8). The alpha component is a flavoprotein, the beta component is a hemoprotein. It depends on siroheme as a cofactor. [4Fe-4S] cluster serves as cofactor.

It catalyses the reaction hydrogen sulfide + 3 NADP(+) + 3 H2O = sulfite + 3 NADPH + 4 H(+). It functions in the pathway sulfur metabolism; hydrogen sulfide biosynthesis; hydrogen sulfide from sulfite (NADPH route): step 1/1. Component of the sulfite reductase complex that catalyzes the 6-electron reduction of sulfite to sulfide. This is one of several activities required for the biosynthesis of L-cysteine from sulfate. This is Sulfite reductase [NADPH] hemoprotein beta-component from Shewanella pealeana (strain ATCC 700345 / ANG-SQ1).